The primary structure comprises 1097 residues: Kinesin-like protein KIF1C (1097 aa).

The region spanning 5–347 (SVKVAVRVRP…LRYADRTKQI (343 aa)) is the Kinesin motor domain. 96–103 (GQTGAGKS) is an ATP binding site. The residue at position 294 (S294) is a Phosphoserine. Residues 358-380 (NARLIRELQEEVARLRELLMAQG) are a coiled coil. Positions 397-434 (GGVLPAASSPPAPASPSSPPPHNGELEPSFSPSAEPQI) are disordered. Positions 404-418 (SSPPAPASPSSPPPH) are enriched in pro residues. The stretch at 437–478 (EEAMERLQETEKIIAELNETWEEKLRKTEALRMEREALLAEM) forms a coiled coil. A Phosphoserine modification is found at S491. Residues 520 to 587 (TRVGQVDVDI…LKSGNRIVMG (68 aa)) enclose the FHA domain. The stretch at 630–671 (EQQGIDIKLEMEKRLQDLENQYRKEKEEADLLLEQQRLYADS) forms a coiled coil. Phosphoserine occurs at positions 671 and 673. Positions 824–868 (AEVEDLRAHIDKLTGILQEVKLQNSSKDRELQALRDRMLRMERVI) form a coiled coil. Disordered stretches follow at residues 897 to 921 (EAVS…ERVS) and 946 to 1097 (QGLQ…GAAV). Residue S911 is modified to Phosphoserine. The span at 949 to 958 (QGSGGRGGGL) shows a compositional bias: gly residues. Over residues 997-1015 (GPQPPEEVTAPPPPPNRRP) the composition is skewed to pro residues. The span at 1016–1026 (PSPRRPHRPRR) shows a compositional bias: basic residues. Position 1028 is a phosphoserine (S1028). An Omega-N-methylarginine modification is found at R1036. The segment covering 1059–1077 (QPQPYPAQRPGPRYPPYTT) has biased composition (pro residues). T1077 is modified (phosphothreonine). S1086 bears the Phosphoserine mark. Basic and acidic residues predominate over residues 1086–1097 (SAPDLKESGAAV).

The protein belongs to the TRAFAC class myosin-kinesin ATPase superfamily. Kinesin family. Unc-104 subfamily.

It is found in the cytoplasm. It localises to the cytoskeleton. Probable motor protein. This Rattus norvegicus (Rat) protein is Kinesin-like protein KIF1C (Kif1c).